Reading from the N-terminus, the 201-residue chain is Small ribosomal subunit protein uS4c (201 aa).

The S4 RNA-binding domain occupies 89-150 (MRLDNIVFRL…RQKSQAIITK (62 aa)).

Belongs to the universal ribosomal protein uS4 family. Part of the 30S ribosomal subunit. Contacts protein S5. The interaction surface between S4 and S5 is involved in control of translational fidelity.

Its subcellular location is the plastid. The protein localises to the chloroplast. One of the primary rRNA binding proteins, it binds directly to 16S rRNA where it nucleates assembly of the body of the 30S subunit. In terms of biological role, with S5 and S12 plays an important role in translational accuracy. The sequence is that of Small ribosomal subunit protein uS4c (rps4) from Physcomitrium patens (Spreading-leaved earth moss).